A 410-amino-acid chain; its full sequence is Enterobactin exporter EntS (410 aa).

Topologically, residues 1 to 21 are cytoplasmic; the sequence is MNKQSWLLNLSLLKTHPAFRA. A helical transmembrane segment spans residues 22 to 42; sequence VFLARFISIVSLGLLGVAVPV. The Periplasmic portion of the chain corresponds to 43–55; it reads QIQMMTHSTWQVG. The chain crosses the membrane as a helical span at residues 56 to 76; the sequence is LSVTLTGGAMFVGLMVGGVLA. Over 77-83 the chain is Cytoplasmic; sequence DRYERKK. A helical membrane pass occupies residues 84-104; that stretch reads VILLARGTCGIGFIGLCLNAL. Topologically, residues 105 to 109 are periplasmic; the sequence is LPEPS. The chain crosses the membrane as a helical span at residues 110–130; sequence LLAIYLLGLWDGFFASLGVTA. The Cytoplasmic segment spans residues 131–156; the sequence is LLAATSALVGRENLMQAGAITMLTVR. The helical transmembrane segment at 157-177 threads the bilayer; the sequence is LGSVISPMIGGLLLATGGVAW. Position 178 (Asn178) is a topological domain, periplasmic. The helical transmembrane segment at 179–199 threads the bilayer; the sequence is YGLAAAGTFITLLPLLSLPEL. The Cytoplasmic portion of the chain corresponds to 200 to 218; that stretch reads PPPPQPLEHPLKSLLAGFR. The helical transmembrane segment at 219–233 threads the bilayer; the sequence is FLLASPLLGGLLTMA. The Periplasmic portion of the chain corresponds to 234–250; the sequence is SAVLVLYPALADNWQMS. Residues 251–271 form a helical membrane-spanning segment; the sequence is AAQIGFLYAAIPLGAAIGALT. Residues 272 to 281 are Cytoplasmic-facing; sequence SGKLAHSARP. Residues 282-301 form a helical membrane-spanning segment; the sequence is GLLMLLSTLGSFLAIGLFGL. Residues 302 to 307 lie on the Periplasmic side of the membrane; that stretch reads MPMWIL. Residues 308 to 330 traverse the membrane as a helical segment; it reads GVVCLALFGWLSAVSSLLQYTML. The Cytoplasmic segment spans residues 331–350; that stretch reads QTQTPEAMLGRINGLWTAQN. Residues 351–371 traverse the membrane as a helical segment; the sequence is VTGDAIGAALLGGLGAMMTPV. Position 372 (Ala372) is a topological domain, periplasmic. A helical transmembrane segment spans residues 373 to 393; the sequence is SASASGFGLLIIGVLLLLVLV. Residues 394–410 lie on the Cytoplasmic side of the membrane; that stretch reads ELRRFRQTPPQVTASDS.

It belongs to the major facilitator superfamily. EntS (TC 2.A.1.38) family.

It localises to the cell inner membrane. Functionally, component of an export pathway for enterobactin. The protein is Enterobactin exporter EntS of Shigella flexneri.